A 42-amino-acid chain; its full sequence is Hemoglobin subunit beta-A (42 aa).

Residues 2–42 (EWTDAERSAILSLWGKIDTDELGPALLARLXLVXXXTQRYF) form the Globin domain.

This sequence belongs to the globin family. Heterotetramer of two alpha chains and two beta chains. In terms of tissue distribution, red blood cells.

In terms of biological role, involved in oxygen transport from gills to the various peripheral tissues. This Catostomus clarkii (Desert sucker) protein is Hemoglobin subunit beta-A.